Here is a 293-residue protein sequence, read N- to C-terminus: Beta-lactamase (293 aa).

The signal sequence occupies residues 1–27; that stretch reads MRFTATVLSRVATGLALGLSMATASLA. Residue Ser-74 is the Acyl-ester intermediate of the active site. Residue 238–240 coordinates substrate; it reads KSG.

Belongs to the class-A beta-lactamase family.

The protein resides in the periplasm. It carries out the reaction a beta-lactam + H2O = a substituted beta-amino acid. Hydrolyzes beta-lactams antibiotics. Rates of hydrolysis relative to benzylpenicillin =100: ampicillin = 27, carbenicillin = 25, cloxacillin = 0, cephaloridine = 4. This is Beta-lactamase from Rhodobacter capsulatus (Rhodopseudomonas capsulata).